Here is a 191-residue protein sequence, read N- to C-terminus: Putative acetyltransferase DDB_G0280825 (191 aa).

The protein belongs to the transferase hexapeptide repeat family.

This chain is Putative acetyltransferase DDB_G0280825, found in Dictyostelium discoideum (Social amoeba).